A 413-amino-acid chain; its full sequence is Aspartate aminotransferase, cytoplasmic (413 aa).

Residues glycine 39 and tryptophan 141 each contribute to the L-aspartate site. Serine 149 carries the phosphoserine modification. Asparagine 195 contributes to the L-aspartate binding site. Position 259 is an N6-(pyridoxal phosphate)lysine (lysine 259). An L-aspartate-binding site is contributed by arginine 387.

Belongs to the class-I pyridoxal-phosphate-dependent aminotransferase family. As to quaternary structure, homodimer. Requires pyridoxal 5'-phosphate as cofactor.

Its subcellular location is the cytoplasm. The enzyme catalyses L-aspartate + 2-oxoglutarate = oxaloacetate + L-glutamate. The catalysed reaction is L-cysteine + 2-oxoglutarate = 2-oxo-3-sulfanylpropanoate + L-glutamate. It catalyses the reaction (2S)-2-aminobutanoate + 2-oxoglutarate = 2-oxobutanoate + L-glutamate. It carries out the reaction 3-sulfino-L-alanine + 2-oxoglutarate = 3-sulfinopyruvate + L-glutamate. Functionally, biosynthesis of L-glutamate from L-aspartate or L-cysteine. Important regulator of levels of glutamate, the major excitatory neurotransmitter of the vertebrate central nervous system. Acts as a scavenger of glutamate in brain neuroprotection. The aspartate aminotransferase activity is involved in hepatic glucose synthesis during development and in adipocyte glyceroneogenesis. Using L-cysteine as substrate, regulates levels of mercaptopyruvate, an important source of hydrogen sulfide. Mercaptopyruvate is converted into H(2)S via the action of 3-mercaptopyruvate sulfurtransferase (3MST). Hydrogen sulfide is an important synaptic modulator and neuroprotectant in the brain. This chain is Aspartate aminotransferase, cytoplasmic, found in Pan troglodytes (Chimpanzee).